Reading from the N-terminus, the 250-residue chain is Proteasome subunit alpha type-4-2 (250 aa).

As to quaternary structure, the 26S proteasome consists of a 20S proteasome core and two 19S regulatory subunits. The 20S proteasome core is composed of 28 subunits that are arranged in four stacked rings, resulting in a barrel-shaped structure. The two end rings are each formed by seven alpha subunits, and the two central rings are each formed by seven beta subunits. The catalytic chamber with the active sites is on the inside of the barrel.

Its subcellular location is the cytoplasm. The protein localises to the nucleus. Functionally, the proteasome is a multicatalytic proteinase complex which is characterized by its ability to cleave peptides with Arg, Phe, Tyr, Leu, and Glu adjacent to the leaving group at neutral or slightly basic pH. The proteasome has an ATP-dependent proteolytic activity. This chain is Proteasome subunit alpha type-4-2, found in Oryza sativa subsp. indica (Rice).